The following is a 249-amino-acid chain: Electron transfer flavoprotein subunit beta (249 aa).

The protein belongs to the ETF beta-subunit/FixA family. As to quaternary structure, heterodimer of an alpha and a beta subunit. Requires FAD as cofactor. The cofactor is AMP.

Its function is as follows. The electron transfer flavoprotein serves as a specific electron acceptor for other dehydrogenases. It transfers the electrons to the main respiratory chain via ETF-ubiquinone oxidoreductase (ETF dehydrogenase). The protein is Electron transfer flavoprotein subunit beta (etfB) of Bradyrhizobium diazoefficiens (strain JCM 10833 / BCRC 13528 / IAM 13628 / NBRC 14792 / USDA 110).